The chain runs to 1392 residues: DNA-directed RNA polymerase subunit beta (1392 aa).

Belongs to the RNA polymerase beta chain family. The RNAP catalytic core consists of 2 alpha, 1 beta, 1 beta' and 1 omega subunit. When a sigma factor is associated with the core the holoenzyme is formed, which can initiate transcription.

It carries out the reaction RNA(n) + a ribonucleoside 5'-triphosphate = RNA(n+1) + diphosphate. Its function is as follows. DNA-dependent RNA polymerase catalyzes the transcription of DNA into RNA using the four ribonucleoside triphosphates as substrates. This is DNA-directed RNA polymerase subunit beta from Neisseria gonorrhoeae (strain ATCC 700825 / FA 1090).